The chain runs to 397 residues: SET domain-containing protein 4 (397 aa).

Residues 29 to 245 (AKLEPCRFKE…KCSEVFINYG (217 aa)) form the SET domain. Tyr244 is an S-adenosyl-L-methionine binding site.

It belongs to the class V-like SAM-binding methyltransferase superfamily. SETD4 family.

The protein localises to the nucleus. It catalyses the reaction L-lysyl(79)-[histone H3] + 3 S-adenosyl-L-methionine = N(6),N(6),N(6)-trimethyl-L-lysyl(79)-[histone H3] + 3 S-adenosyl-L-homocysteine + 3 H(+). The enzyme catalyses L-lysyl(20)-[histone H4] + S-adenosyl-L-methionine = N(6)-methyl-L-lysyl(20)-[histone H4] + S-adenosyl-L-homocysteine + H(+). It carries out the reaction N(6)-methyl-L-lysyl(20)-[histone H4] + S-adenosyl-L-methionine = N(6),N(6)-dimethyl-L-lysyl(20)-[histone H4] + S-adenosyl-L-homocysteine + H(+). The catalysed reaction is N(6),N(6)-dimethyl-L-lysyl(20)-[histone H4] + S-adenosyl-L-methionine = N(6),N(6),N(6)-trimethyl-L-lysyl(20)-[histone H4] + S-adenosyl-L-homocysteine + H(+). Its function is as follows. Protein-lysine N-methyltransferase involved in the regulation of cell quiescence by catalyzing the trimethylation of 'Lys-20' of histone H4 and 'Lys-79' of histone H3 (H4K20me3 and H3K79me3, respectively) during diapause formation, a state of obligate dormancy. The sequence is that of SET domain-containing protein 4 from Artemia parthenogenetica (Brine shrimp).